A 308-amino-acid polypeptide reads, in one-letter code: Homoserine kinase (308 aa).

85 to 95 (PLTRGLGSSAA) serves as a coordination point for ATP.

The protein belongs to the GHMP kinase family. Homoserine kinase subfamily.

It is found in the cytoplasm. The catalysed reaction is L-homoserine + ATP = O-phospho-L-homoserine + ADP + H(+). It participates in amino-acid biosynthesis; L-threonine biosynthesis; L-threonine from L-aspartate: step 4/5. Functionally, catalyzes the ATP-dependent phosphorylation of L-homoserine to L-homoserine phosphate. The protein is Homoserine kinase of Caldicellulosiruptor saccharolyticus (strain ATCC 43494 / DSM 8903 / Tp8T 6331).